Here is a 492-residue protein sequence, read N- to C-terminus: MANNYKKIVLLKGLEVINDYHFRIVKSLLSNDLKLNPKMKEEYDKIQIADLMEEKFPGDAGLGKLIEFFKEIPTLGDLAETLKREKLKVANKIESIPVKGIIPSKKTKQKEVYPATPACTPSNRLTAKGAEETLGPQKRKKPSEEETGTKRSKMSKEQTRPSCSAGASTSTAMGRSPPPQTSSSAPPNTSSTESLKPLANRHATASKNIFREDPIIAMVLNATKVFKYESSENEQRRMFHATVATQTQFFHVKVLNINLKRKFIKKRIIIISNYSKRNSLLEVNEASSVSEAGPDQTFEVPKDIIRRAKKIPKINILHKQTSGYIVYGLFMLHTKIVNRKTTIYEIQDKTGSMAVVGKGECHNIPCEKGDKLRLFCFRLRKRENMSKLMSEMHSFIQIQKNTNQRSHDSRSMALPQEQSQHPKPSEASTTLPESHLKTPQMPPTTPSSSSFTKKDETHPGAQSSPANFRITSPTVAPPLSSDTSTNRHPAVP.

The 88-residue stretch at 1–88 (MANNYKKIVL…AETLKREKLK (88 aa)) folds into the Pyrin domain. 2 disordered regions span residues 106–199 (KTKQ…KPLA) and 400–492 (KNTN…PAVP). Positions 142-159 (PSEEETGTKRSKMSKEQT) are enriched in basic and acidic residues. The segment covering 160-173 (RPSCSAGASTSTAM) has biased composition (polar residues). Residues 181-194 (TSSSAPPNTSSTES) show a composition bias toward low complexity. The region spanning 199–399 (ANRHATASKN…SEMHSFIQIQ (201 aa)) is the HIN-200 domain. Polar residues-rich tracts occupy residues 416-432 (QEQSQHPKPSEASTTLP) and 460-492 (GAQSSPANFRITSPTVAPPLSSDTSTNRHPAVP).

It belongs to the HIN-200 family. As to quaternary structure, interacts with MDM2. Expressed in spleen, lymph node and peripheral blood leukocytes, and at lower levels in thymus, bone marrow and fetal liver. Down-regulated in breast tumors.

It localises to the nucleus. The protein resides in the nucleoplasm. Its subcellular location is the nucleus speckle. Its function is as follows. Major mediator of the tumor suppressor activity of IFN in breast cancer cells. Promotes ubiquitination and subsequent degradation of MDM2, which leads to p53/TP53 stabilization. Promotes ubiquitination and subsequent degradation of HDAC1, which in turn enhances maspin expression, and impairs invasive activity of cancer cells. The sequence is that of Pyrin and HIN domain-containing protein 1 (PYHIN1) from Homo sapiens (Human).